Consider the following 260-residue polypeptide: 1-(5-phosphoribosyl)-5-[(5-phosphoribosylamino)methylideneamino] imidazole-4-carboxamide isomerase (260 aa).

The active-site Proton acceptor is the D8. D130 acts as the Proton donor in catalysis.

This sequence belongs to the HisA/HisF family.

It is found in the cytoplasm. It catalyses the reaction 1-(5-phospho-beta-D-ribosyl)-5-[(5-phospho-beta-D-ribosylamino)methylideneamino]imidazole-4-carboxamide = 5-[(5-phospho-1-deoxy-D-ribulos-1-ylimino)methylamino]-1-(5-phospho-beta-D-ribosyl)imidazole-4-carboxamide. It participates in amino-acid biosynthesis; L-histidine biosynthesis; L-histidine from 5-phospho-alpha-D-ribose 1-diphosphate: step 4/9. The sequence is that of 1-(5-phosphoribosyl)-5-[(5-phosphoribosylamino)methylideneamino] imidazole-4-carboxamide isomerase from Chlorobaculum parvum (strain DSM 263 / NCIMB 8327) (Chlorobium vibrioforme subsp. thiosulfatophilum).